A 265-amino-acid polypeptide reads, in one-letter code: Small ribosomal subunit protein eS4 (265 aa).

Residues 42 to 104 (LPLILIIRNR…TNENYRLLYD (63 aa)) form the S4 RNA-binding domain.

It belongs to the eukaryotic ribosomal protein eS4 family.

It localises to the cytoplasm. The protein is Small ribosomal subunit protein eS4 (RPS4) of Zea mays (Maize).